The following is a 692-amino-acid chain: Elongation factor G (692 aa).

In terms of domain architecture, tr-type G spans Glu-8 to Thr-283. Residues Ala-17 to Thr-24, Asp-81 to His-85, and Asn-135 to Asp-138 contribute to the GTP site.

The protein belongs to the TRAFAC class translation factor GTPase superfamily. Classic translation factor GTPase family. EF-G/EF-2 subfamily.

It is found in the cytoplasm. In terms of biological role, catalyzes the GTP-dependent ribosomal translocation step during translation elongation. During this step, the ribosome changes from the pre-translocational (PRE) to the post-translocational (POST) state as the newly formed A-site-bound peptidyl-tRNA and P-site-bound deacylated tRNA move to the P and E sites, respectively. Catalyzes the coordinated movement of the two tRNA molecules, the mRNA and conformational changes in the ribosome. The sequence is that of Elongation factor G from Nitratiruptor sp. (strain SB155-2).